An 862-amino-acid chain; its full sequence is uncharacterized protein (862 aa).

Disordered stretches follow at residues H45–V91, R633–D824, and G837–S862. Acidic residues-rich tracts occupy residues M57–E69 and P78–V91. Basic and acidic residues-rich tracts occupy residues R633 to K650, R657 to K686, and T694 to T703. Residues E751–K760 show a composition bias toward basic residues. Positions K761 to S779 are enriched in basic and acidic residues.

This is an uncharacterized protein from Ictaluridae (bullhead catfishes).